The chain runs to 335 residues: MTAPSKPVLVADIGGTNARFALADVDASVPLLDDTSREFAVVDFGSLGEAARYYLDQIGVQATQGVFAVAGRVDGDEARITNHPWVISRSRTATMLGFSTLHLINDFAAQAMAISLLRPQDVVQVGGASWRPAPIDQARNYGVIGPGTGLGVGGLIIRNGRCFPLETEGGHVSFPPGTPEEIRILEILSEQFGRVSNERLICGPGLVNIHRALSEIAGVDPGPLQPKDITARAAAGDPRSSRTIDLFCAIFGAIAGDMVLMQGAWDGVFLTGGLVPKVLDSLQHSGFRQRFEHKGRFSAIMSKVPSLAVMHPHAGLLGAAAYAVDAQRQHPGEQR.

11–16 lines the ATP pocket; it reads ADIGGT.

It belongs to the bacterial glucokinase family.

The protein localises to the cytoplasm. It catalyses the reaction D-glucose + ATP = D-glucose 6-phosphate + ADP + H(+). The protein is Glucokinase of Xanthomonas axonopodis pv. citri (strain 306).